Reading from the N-terminus, the 52-residue chain is Large ribosomal subunit protein bL33 (52 aa).

It belongs to the bacterial ribosomal protein bL33 family.

This Chlamydia muridarum (strain MoPn / Nigg) protein is Large ribosomal subunit protein bL33 (rpmG).